The primary structure comprises 308 residues: Glycerol-3-phosphate dehydrogenase [NAD(P)+] (308 aa).

NADPH-binding residues include Trp-13, Arg-33, and Lys-81. Lys-81 and Gly-109 together coordinate sn-glycerol 3-phosphate. Ala-113 serves as a coordination point for NADPH. Residues Lys-163, Asp-216, Ser-226, Arg-227, and Asn-228 each coordinate sn-glycerol 3-phosphate. Residue Lys-163 is the Proton acceptor of the active site. Residue Arg-227 coordinates NADPH. Glu-253 is a binding site for NADPH.

This sequence belongs to the NAD-dependent glycerol-3-phosphate dehydrogenase family.

The protein localises to the cytoplasm. It catalyses the reaction sn-glycerol 3-phosphate + NAD(+) = dihydroxyacetone phosphate + NADH + H(+). The catalysed reaction is sn-glycerol 3-phosphate + NADP(+) = dihydroxyacetone phosphate + NADPH + H(+). Its pathway is membrane lipid metabolism; glycerophospholipid metabolism. Catalyzes the reduction of the glycolytic intermediate dihydroxyacetone phosphate (DHAP) to sn-glycerol 3-phosphate (G3P), the key precursor for phospholipid synthesis. This chain is Glycerol-3-phosphate dehydrogenase [NAD(P)+], found in Thermosynechococcus vestitus (strain NIES-2133 / IAM M-273 / BP-1).